Consider the following 357-residue polypeptide: MMKGAMGCPVAAVMEGSFSCTVANRFYQLLDDESDPFDNLREAERCWQQRKNLSKVVARRGDPGSRGCATRRELQKQRKQLGTPAPPPQPGQKQAPKQEECGGKDNSRAEKEHKTAWRPSFMEYLSSETESQAELTAQSLFRPTAKLNYERPRGCGRGRGGMQGRGRGGGINKSFDGFDQRGKREFGRQNDNDKIEMELTAPMEATAKTAKSPGVSEGELLNKVAEGKPREEVVQEMTLDEWKNLQQQNRPKHEFNIRRPESTVPSKAVVIHKSKYSDDIQKGELEDDYHIFRRAVNDITFQLDINFGSLPRPGCGSRGARGRGRGRQMEETGPQPEAMVQIVAPNPDDPEDFPALT.

3 disordered regions span residues 56-116, 150-186, and 313-357; these read VVAR…HKTA, ERPRGCGRGRGGMQGRGRGGGINKSFDGFDQRGKREF, and PGCG…PALT. Residues 96–115 are compositionally biased toward basic and acidic residues; that stretch reads PKQEECGGKDNSRAEKEHKT. Gly residues predominate over residues 155–171; the sequence is CGRGRGGMQGRGRGGGI. Residues 176–186 show a composition bias toward basic and acidic residues; that stretch reads DGFDQRGKREF. Residues 348-357 are compositionally biased toward acidic residues; it reads DDPEDFPALT.

Belongs to the SERBP1-HABP4 family. Associates with ribosomes; promoting ribosome stabilization. Interacts with EEF2/eEF2; promoting ribosome stabilization.

It is found in the nucleus. The protein localises to the cytoplasm. The protein resides in the stress granule. It localises to the sarcoplasm. Its subcellular location is the nuclear body. It is found in the nucleolus. The protein localises to the nucleus speckle. The protein resides in the cajal body. It localises to the gem. Functionally, ribosome-binding protein that promotes ribosome hibernation, a process during which ribosomes are stabilized in an inactive state and preserved from proteasomal degradation. Acts via its association with EEF2/eEF2 factor at the A-site of the ribosome, promoting ribosome stabilization in an inactive state compatible with storage. Plays a key role in ribosome hibernation in the mature egg by promoting ribosome stabilization. Ribosomes, which are produced in large quantities during oogenesis, are stored and translationally repressed in the egg and early embryo. In Gallus gallus (Chicken), this protein is Intracellular hyaluronan-binding protein 4.